The sequence spans 625 residues: Baeyer-Villiger monooxygenase ATR8 (625 aa).

FAD-binding positions include aspartate 112, 120-123 (TWYW), aspartate 132, and tyrosine 138. 130-132 (QCD) lines the NADP(+) pocket. NADP(+) contacts are provided by residues 266–272 (TGATAIQ), 289–290 (RT), and 405–406 (KR).

The protein belongs to the FAD-binding monooxygenase family. The cofactor is FAD.

It participates in mycotoxin biosynthesis. Functionally, baeyer-Villiger monooxygenase; part of the core atranone cluster (CAC) which products are predicted to catalyze most or all steps of mycotoxin atranone synthesis, starting from geranylgeranyl pyrophosphate (GGPP). The initial cyclization of GGPP to dolabellane is probably performed by the terpene cyclase ATR13. The Baeyer-Villiger oxidation near the end of the atranone synthesis, which converts atranones D and E to atranones F and G is predicted to be catalyzed by the monooxygenase ATR8. Of the CAC's other predicted gene products, the reducing PKS ATR6 might synthesize a polyketide chain. This polyketide is probably transferred onto the atranone backbone by the polyketide transferase ATR5. Other predicted CAC products include 4 oxygenases (ATR2, ATR3, ATR4, and ATR14), 3 short-chain reductases (ATR7, ATR9, and ATR10), and a methyltransferase (ATR12). These may all be involved in the various steps of atranone biosynthesis, although their specific roles must await experimental determination. This Stachybotrys chlorohalonatus (strain IBT 40285) protein is Baeyer-Villiger monooxygenase ATR8.